Consider the following 96-residue polypeptide: Protein Vpr (96 aa).

Residues 1–42 (MEQAPEDQGPQREPYNEWALELLEELKNEAVRHFPRLWLHGL) are homooligomerization. A phosphoserine; by host mark is found at S79 and S96.

Belongs to the HIV-1 VPR protein family. In terms of assembly, homooligomer, may form homodimer. Interacts with p6-gag region of the Pr55 Gag precursor protein through a (Leu-X-X)4 motif near the C-terminus of the P6gag protein. Interacts with host UNG. May interact with host RAD23A/HHR23A. Interacts with host VPRBP/DCAF1, leading to hijack the CUL4A-RBX1-DDB1-DCAF1/VPRBP complex, mediating ubiquitination of host proteins such as TERT and ZGPAT and arrest of the cell cycle in G2 phase. In terms of processing, phosphorylated on several residues by host. These phosphorylations regulate VPR activity for the nuclear import of the HIV-1 pre-integration complex.

It is found in the virion. The protein localises to the host nucleus. It localises to the host extracellular space. Its function is as follows. During virus replication, may deplete host UNG protein, and incude G2-M cell cycle arrest. Acts by targeting specific host proteins for degradation by the 26S proteasome, through association with the cellular CUL4A-DDB1 E3 ligase complex by direct interaction with host VPRPB/DCAF-1. Cell cycle arrest reportedly occurs within hours of infection and is not blocked by antiviral agents, suggesting that it is initiated by the VPR carried into the virion. Additionally, VPR induces apoptosis in a cell cycle dependent manner suggesting that these two effects are mechanistically linked. Detected in the serum and cerebrospinal fluid of AIDS patient, VPR may also induce cell death to bystander cells. Functionally, during virus entry, plays a role in the transport of the viral pre-integration (PIC) complex to the host nucleus. This function is crucial for viral infection of non-dividing macrophages. May act directly at the nuclear pore complex, by binding nucleoporins phenylalanine-glycine (FG)-repeat regions. This is Protein Vpr from Human immunodeficiency virus type 1 group M subtype G (isolate SE6165) (HIV-1).